Reading from the N-terminus, the 498-residue chain is ATP synthase subunit beta, chloroplastic (498 aa).

172–179 contacts ATP; sequence GGAGVGKT.

Belongs to the ATPase alpha/beta chains family. F-type ATPases have 2 components, CF(1) - the catalytic core - and CF(0) - the membrane proton channel. CF(1) has five subunits: alpha(3), beta(3), gamma(1), delta(1), epsilon(1). CF(0) has four main subunits: a(1), b(1), b'(1) and c(9-12).

It is found in the plastid. Its subcellular location is the chloroplast thylakoid membrane. It carries out the reaction ATP + H2O + 4 H(+)(in) = ADP + phosphate + 5 H(+)(out). Produces ATP from ADP in the presence of a proton gradient across the membrane. The catalytic sites are hosted primarily by the beta subunits. This chain is ATP synthase subunit beta, chloroplastic, found in Eucalyptus globulus subsp. globulus (Tasmanian blue gum).